We begin with the raw amino-acid sequence, 117 residues long: MQNIPPQVQAMLGQLESYQQQLQLVIQQKQKVQADLNEAKKALEEIEALPDDAQVYKTVGTLIVKTTKEKALQELKEKVETLEVRLNALNRQEQKINEKVKELTQKIQAALRPPTAG.

The protein belongs to the prefoldin subunit beta family. As to quaternary structure, heterohexamer of two alpha and four beta subunits.

The protein resides in the cytoplasm. Molecular chaperone capable of stabilizing a range of proteins. Seems to fulfill an ATP-independent, HSP70-like function in archaeal de novo protein folding. This chain is Prefoldin subunit beta (pfdB), found in Pyrococcus abyssi (strain GE5 / Orsay).